The primary structure comprises 570 residues: Proline--tRNA ligase (570 aa).

The protein belongs to the class-II aminoacyl-tRNA synthetase family. ProS type 1 subfamily. As to quaternary structure, homodimer.

It is found in the cytoplasm. It catalyses the reaction tRNA(Pro) + L-proline + ATP = L-prolyl-tRNA(Pro) + AMP + diphosphate. Its function is as follows. Catalyzes the attachment of proline to tRNA(Pro) in a two-step reaction: proline is first activated by ATP to form Pro-AMP and then transferred to the acceptor end of tRNA(Pro). As ProRS can inadvertently accommodate and process non-cognate amino acids such as alanine and cysteine, to avoid such errors it has two additional distinct editing activities against alanine. One activity is designated as 'pretransfer' editing and involves the tRNA(Pro)-independent hydrolysis of activated Ala-AMP. The other activity is designated 'posttransfer' editing and involves deacylation of mischarged Ala-tRNA(Pro). The misacylated Cys-tRNA(Pro) is not edited by ProRS. The chain is Proline--tRNA ligase from Clostridium botulinum (strain Eklund 17B / Type B).